We begin with the raw amino-acid sequence, 565 residues long: Calcium-dependent protein kinase 21 (565 aa).

Residue glycine 2 is the site of N-myristoyl glycine attachment. Residues 28 to 55 (PVPDAEAASPRKDGVDGDGDDVRGGGGG) form a disordered region. A compositionally biased stretch (basic and acidic residues) spans 36–50 (SPRKDGVDGDGDDVR). Residues 77–358 (YVLGKELGRG…AKQVLEHPWL (282 aa)) enclose the Protein kinase domain. ATP-binding positions include 83 to 91 (LGRGEFGVT) and lysine 106. Aspartate 224 serves as the catalytic Proton acceptor. Residues 364 to 394 (APNVSLGDAVRARLQQFSAMNKFKKKALGVV) are autoinhibitory domain. 4 consecutive EF-hand domains span residues 401–436 (EEVD…NGQP), 437–472 (VPEP…LKKM), 473–500 (SNDE…ELRE), and 504–539 (PNEQ…GADW). 19 residues coordinate Ca(2+): aspartate 414, aspartate 416, asparagine 418, histidine 420, glutamate 425, aspartate 450, aspartate 452, asparagine 454, threonine 456, glutamate 461, aspartate 486, aspartate 488, serine 490, glutamate 497, aspartate 517, aspartate 519, aspartate 521, arginine 523, and glutamate 528.

It belongs to the protein kinase superfamily. Ser/Thr protein kinase family. CDPK subfamily. Expressed in spikelets and developing seeds.

The protein localises to the membrane. It catalyses the reaction L-seryl-[protein] + ATP = O-phospho-L-seryl-[protein] + ADP + H(+). It carries out the reaction L-threonyl-[protein] + ATP = O-phospho-L-threonyl-[protein] + ADP + H(+). With respect to regulation, activated by calcium. Autophosphorylation may play an important role in the regulation of the kinase activity. May play a role in signal transduction pathways that involve calcium as a second messenger. Functions in signal transduction pathways that positively regulate responses to abscisic acid (ABA) and salt stress. The chain is Calcium-dependent protein kinase 21 from Oryza sativa subsp. japonica (Rice).